A 292-amino-acid chain; its full sequence is Ribosomal protein L11 methyltransferase (292 aa).

S-adenosyl-L-methionine contacts are provided by Thr-143, Gly-164, Asp-186, and Asn-228.

Belongs to the methyltransferase superfamily. PrmA family.

It localises to the cytoplasm. It carries out the reaction L-lysyl-[protein] + 3 S-adenosyl-L-methionine = N(6),N(6),N(6)-trimethyl-L-lysyl-[protein] + 3 S-adenosyl-L-homocysteine + 3 H(+). Methylates ribosomal protein L11. This chain is Ribosomal protein L11 methyltransferase, found in Tolumonas auensis (strain DSM 9187 / NBRC 110442 / TA 4).